A 358-amino-acid chain; its full sequence is Peroxidase 54 (358 aa).

A signal peptide spans methionine 1–alanine 31. Residue glutamine 32 is modified to Pyrrolidone carboxylic acid. 2 N-linked (GlcNAc...) asparagine glycosylation sites follow: asparagine 34 and asparagine 44. Intrachain disulfides connect cysteine 42–cysteine 122, cysteine 75–cysteine 80, cysteine 128–cysteine 330, and cysteine 207–cysteine 239. Histidine 73 acts as the Proton acceptor in catalysis. Aspartate 74, valine 77, glycine 79, aspartate 81, and serine 83 together coordinate Ca(2+). 3 N-linked (GlcNAc...) asparagine glycosylation sites follow: asparagine 103, asparagine 161, and asparagine 166. Proline 170 contributes to the substrate binding site. A glycan (N-linked (GlcNAc...) asparagine) is linked at asparagine 178. A heme b-binding site is contributed by histidine 200. Threonine 201 serves as a coordination point for Ca(2+). Residues asparagine 218, asparagine 228, and asparagine 242 are each glycosylated (N-linked (GlcNAc...) asparagine). Positions 252, 255, and 260 each coordinate Ca(2+). Asparagine 298 is a glycosylation site (N-linked (GlcNAc...) asparagine).

This sequence belongs to the peroxidase family. Classical plant (class III) peroxidase subfamily. Heme b serves as cofactor. Requires Ca(2+) as cofactor.

It localises to the secreted. The protein resides in the vacuole. The enzyme catalyses 2 a phenolic donor + H2O2 = 2 a phenolic radical donor + 2 H2O. Removal of H(2)O(2), oxidation of toxic reductants, biosynthesis and degradation of lignin, suberization, auxin catabolism, response to environmental stresses such as wounding, pathogen attack and oxidative stress. These functions might be dependent on each isozyme/isoform in each plant tissue. The polypeptide is Peroxidase 54 (PER54) (Arabidopsis thaliana (Mouse-ear cress)).